A 313-amino-acid chain; its full sequence is Uracil-DNA glycosylase (313 aa).

A disordered region spans residues 35–68; sequence DEPMPKKCRRPAGPPKGFISTRGDTSPSSDNNHI. Residues 56–68 show a composition bias toward polar residues; the sequence is RGDTSPSSDNNHI. Asp-153 functions as the Proton acceptor in the catalytic mechanism.

This sequence belongs to the uracil-DNA glycosylase (UDG) superfamily. UNG family.

It localises to the host nucleus. It catalyses the reaction Hydrolyzes single-stranded DNA or mismatched double-stranded DNA and polynucleotides, releasing free uracil.. Its function is as follows. Excises uracil residues from the DNA which can arise as a result of misincorporation of dUMP residues by DNA polymerase or deamination of cytosines. Therefore may reduce deleterious uracil incorporation into the viral genome, particularly in terminally differentiated cells which lack DNA repair enzymes. The polypeptide is Uracil-DNA glycosylase (MDV014) (Gallus gallus (Chicken)).